The primary structure comprises 260 residues: Acetylglutamate kinase (260 aa).

Residues 46–47 (GG), arginine 68, and asparagine 160 each bind substrate.

The protein belongs to the acetylglutamate kinase family. ArgB subfamily.

It localises to the cytoplasm. The catalysed reaction is N-acetyl-L-glutamate + ATP = N-acetyl-L-glutamyl 5-phosphate + ADP. It participates in amino-acid biosynthesis; L-arginine biosynthesis; N(2)-acetyl-L-ornithine from L-glutamate: step 2/4. In terms of biological role, catalyzes the ATP-dependent phosphorylation of N-acetyl-L-glutamate. This Shewanella oneidensis (strain ATCC 700550 / JCM 31522 / CIP 106686 / LMG 19005 / NCIMB 14063 / MR-1) protein is Acetylglutamate kinase.